The chain runs to 43 residues: Protein PsbN (43 aa).

The chain crosses the membrane as a helical span at residues 5–27; it reads TLVAIPISCLLVSFTGYALYTAF.

This sequence belongs to the PsbN family.

The protein resides in the plastid. The protein localises to the chloroplast thylakoid membrane. Its function is as follows. May play a role in photosystem I and II biogenesis. The protein is Protein PsbN of Sphagnum cuspidatum (Bog moss).